A 323-amino-acid polypeptide reads, in one-letter code: Viral cathepsin (323 aa).

The N-terminal stretch at 1–16 (MNKILFYLFVYGVVNS) is a signal peptide. The propeptide at 17 to 112 (AAYDLLKAPN…IVLDQPPGKG (96 aa)) is activation peptide. 3 cysteine pairs are disulfide-bonded: C133-C174, C167-C207, and C262-C310. C136 is a catalytic residue. N158 carries N-linked (GlcNAc...) asparagine; by host glycosylation. Residues H269 and N289 contribute to the active site.

This sequence belongs to the peptidase C1 family. In terms of assembly, interacts with chitinase/CHIA; this interaction maintains VCATH in the host endoplasmic reticulum. Synthesized as an inactive proenzyme and activated by proteolytic removal of the inhibitory propeptide.

Its subcellular location is the host endoplasmic reticulum. It catalyses the reaction Endopeptidase of broad specificity, hydrolyzing substrates of both cathepsin L and cathepsin B.. In terms of biological role, cysteine protease that plays an essential role in host liquefaction to facilitate horizontal transmission of the virus. Accumulates within infected cells as an inactive proenzyme (proV-CATH), which is activated by proteolytic cleavage upon cell death. In Lepidoptera (butterflies and moths), this protein is Viral cathepsin (VCATH).